The chain runs to 485 residues: E3 ubiquitin-protein ligase TRIM68 (485 aa).

An RING-type zinc finger spans residues 16-61; the sequence is CPICMTFLREPVSISCGHTFCHSCLSGLWKLPGESQNLSYTCPLCR. The B box-type zinc-finger motif lies at 93 to 134; it reads LKTDVCDLHKEQLTMFCKEDDMVTCEACKQSPEHEAHSVVPI. Zn(2+) contacts are provided by Cys98, His101, Cys120, and His126. Positions 144 to 226 form a coiled coil; sequence KLQQALEHLR…EQEKGETASK (83 aa). One can recognise a B30.2/SPRY domain in the interval 285–483; that stretch reads LKTDCRVLGL…TPLTICTLGG (199 aa).

This sequence belongs to the TRIM/RBCC family. Interacts with AR/androgen receptor (via ligand-binding domain). Interacts with KAT5/TIP60. Auto-ubiquitinated.

The protein resides in the cytoplasm. It localises to the perinuclear region. The protein localises to the nucleus. It carries out the reaction S-ubiquitinyl-[E2 ubiquitin-conjugating enzyme]-L-cysteine + [acceptor protein]-L-lysine = [E2 ubiquitin-conjugating enzyme]-L-cysteine + N(6)-ubiquitinyl-[acceptor protein]-L-lysine.. Its pathway is protein modification; protein ubiquitination. Functions as a ubiquitin E3 ligase. Acts as a coactivator of androgen receptor (AR) depending on its ubiquitin ligase activity. The chain is E3 ubiquitin-protein ligase TRIM68 (Trim68) from Mus musculus (Mouse).